The chain runs to 360 residues: Ribosomal RNA large subunit methyltransferase M (360 aa).

S-adenosyl-L-methionine-binding positions include serine 187, 220 to 223 (CPGG), aspartate 239, aspartate 259, and aspartate 276. Lysine 305 functions as the Proton acceptor in the catalytic mechanism.

It belongs to the class I-like SAM-binding methyltransferase superfamily. RNA methyltransferase RlmE family. RlmM subfamily. Monomer.

The protein localises to the cytoplasm. The enzyme catalyses cytidine(2498) in 23S rRNA + S-adenosyl-L-methionine = 2'-O-methylcytidine(2498) in 23S rRNA + S-adenosyl-L-homocysteine + H(+). Functionally, catalyzes the 2'-O-methylation at nucleotide C2498 in 23S rRNA. This Shewanella pealeana (strain ATCC 700345 / ANG-SQ1) protein is Ribosomal RNA large subunit methyltransferase M.